The primary structure comprises 495 residues: UDP-N-acetylmuramate--L-alanine ligase (495 aa).

153 to 159 is an ATP binding site; it reads GTHGKTT.

Belongs to the MurCDEF family.

The protein resides in the cytoplasm. The enzyme catalyses UDP-N-acetyl-alpha-D-muramate + L-alanine + ATP = UDP-N-acetyl-alpha-D-muramoyl-L-alanine + ADP + phosphate + H(+). It participates in cell wall biogenesis; peptidoglycan biosynthesis. Functionally, cell wall formation. This chain is UDP-N-acetylmuramate--L-alanine ligase, found in Gloeothece citriformis (strain PCC 7424) (Cyanothece sp. (strain PCC 7424)).